Here is a 315-residue protein sequence, read N- to C-terminus: tRNA dimethylallyltransferase (315 aa).

10 to 17 (GPTASGKS) contacts ATP. 12 to 17 (TASGKS) serves as a coordination point for substrate. The interaction with substrate tRNA stretch occupies residues 35–38 (DSMQ).

This sequence belongs to the IPP transferase family. In terms of assembly, monomer. The cofactor is Mg(2+).

It catalyses the reaction adenosine(37) in tRNA + dimethylallyl diphosphate = N(6)-dimethylallyladenosine(37) in tRNA + diphosphate. In terms of biological role, catalyzes the transfer of a dimethylallyl group onto the adenine at position 37 in tRNAs that read codons beginning with uridine, leading to the formation of N6-(dimethylallyl)adenosine (i(6)A). The chain is tRNA dimethylallyltransferase from Thermoanaerobacter pseudethanolicus (strain ATCC 33223 / 39E) (Clostridium thermohydrosulfuricum).